The following is a 430-amino-acid chain: Cortical fragment-lytic enzyme (430 aa).

LysM domains follow at residues 3–47 and 52–96; these read QIVT…ALIV and NNYY…QLYV. The 327-residue stretch at 104–430 folds into the GH18 domain; it reads VESIAYLQPS…VENFTITKKG (327 aa). Catalysis depends on Glu219, which acts as the Proton donor.

Belongs to the glycosyl hydrolase 18 family. Chitinase class II subfamily.

The protein localises to the spore cortex. With respect to regulation, inhibited by diethylpyrocarbonate. Its function is as follows. N-acetylglucosaminidase involved in cortex peptidoglycan degradation during germination. Cleaves only partially degraded spore peptidoglycans. Recognizes muramic acid delta-lactam residues specific to spore peptidoglycans. The sequence is that of Cortical fragment-lytic enzyme from Bacillus cereus.